The following is a 279-amino-acid chain: MISRTLLKRSLPTVQFLRPFTRSSIRRSAHEEDLVNLNELPRQKSLEENYVPLINPTEKYKVQIEELHKFGTYIMACLPKYVQQFSVWKDELTIYVAPSAILPTMLFLKNNTACQFKQVSDVTAADYPSRTNRFDVVYNLLSVRHNSRIRVKTYANETTPVPSITPLFNGANWFERETYDLFGVFFEGHPDLRRILTDYGFEGHPLRKDFPTTGYTEVRYDEEKKRIIYEPLELTQAWRNFTVGSSVWEPVGEGKDFTPESFKLPTPEPEPEKESDEKK.

A mitochondrion-targeting transit peptide spans 1–27 (MISRTLLKRSLPTVQFLRPFTRSSIRR). Residues 249–279 (EPVGEGKDFTPESFKLPTPEPEPEKESDEKK) form a disordered region. Over residues 270-279 (EPEKESDEKK) the composition is skewed to basic and acidic residues.

It belongs to the complex I 30 kDa subunit family. In terms of assembly, core subunit of respiratory chain NADH dehydrogenase (Complex I).

Its subcellular location is the mitochondrion inner membrane. The catalysed reaction is a ubiquinone + NADH + 5 H(+)(in) = a ubiquinol + NAD(+) + 4 H(+)(out). In terms of biological role, core subunit of the mitochondrial membrane respiratory chain NADH dehydrogenase (Complex I) which catalyzes electron transfer from NADH through the respiratory chain, using ubiquinone as an electron acceptor. Plays a role in cell wall integrity and is involved in osmotic and oxidative resistance, yeast to hypha transition and the ability to damage and invade oral epithelial cells. The protein is NADH dehydrogenase [ubiquinone] iron-sulfur protein 3, mitochondrial (ALI1) of Candida albicans (strain SC5314 / ATCC MYA-2876) (Yeast).